The sequence spans 287 residues: Nitrogenase iron protein (287 aa).

An ATP-binding site is contributed by glycine 8–serine 15. Position 96 (cysteine 96) interacts with [4Fe-4S] cluster. Arginine 99 is modified (ADP-ribosylarginine; by dinitrogenase reductase ADP-ribosyltransferase). Cysteine 130 provides a ligand contact to [4Fe-4S] cluster.

This sequence belongs to the NifH/BchL/ChlL family. As to quaternary structure, homodimer. [4Fe-4S] cluster serves as cofactor. Post-translationally, the reversible ADP-ribosylation of Arg-99 inactivates the nitrogenase reductase and regulates nitrogenase activity.

The enzyme catalyses N2 + 8 reduced [2Fe-2S]-[ferredoxin] + 16 ATP + 16 H2O = H2 + 8 oxidized [2Fe-2S]-[ferredoxin] + 2 NH4(+) + 16 ADP + 16 phosphate + 6 H(+). In terms of biological role, the key enzymatic reactions in nitrogen fixation are catalyzed by the nitrogenase complex, which has 2 components: the iron protein and the molybdenum-iron protein. The sequence is that of Nitrogenase iron protein from Frankia casuarinae (strain DSM 45818 / CECT 9043 / HFP020203 / CcI3).